The primary structure comprises 880 residues: Probable dipeptidyl-aminopeptidase B (880 aa).

A compositionally biased stretch (basic and acidic residues) spans 1–26 (MPRQRAPKEEEAELLTKQERSARSSE). A disordered region spans residues 1–71 (MPRQRAPKEE…KYTDEDDEAQ (71 aa)). Residues 1–93 (MPRQRAPKEE…PISVDKKTRR (93 aa)) lie on the Cytoplasmic side of the membrane. Over residues 30–40 (DTSISSISTTS) the composition is skewed to low complexity. Residues 94-114 (WLWIVGIACVTGWALALVFFL) form a helical; Signal-anchor for type II membrane protein membrane-spanning segment. Over 115-880 (MSGSYKHVST…AQVDARMERR (766 aa)) the chain is Vacuolar. A glycan (N-linked (GlcNAc...) asparagine) is linked at N533. The active-site Charge relay system is the S724. A glycan (N-linked (GlcNAc...) asparagine) is linked at N778. Active-site charge relay system residues include D801 and H834.

This sequence belongs to the peptidase S9B family.

Its subcellular location is the vacuole membrane. It carries out the reaction Release of an N-terminal dipeptide, Xaa-Yaa-|-Zaa-, from a polypeptide, preferentially when Yaa is Pro, provided Zaa is neither Pro nor hydroxyproline.. Its function is as follows. Type IV dipeptidyl-peptidase which removes N-terminal dipeptides sequentially from polypeptides having unsubstituted N-termini provided that the penultimate residue is proline. The chain is Probable dipeptidyl-aminopeptidase B (dapB) from Pyrenophora tritici-repentis (strain Pt-1C-BFP) (Wheat tan spot fungus).